Here is a 461-residue protein sequence, read N- to C-terminus: L-seryl-tRNA(Sec) selenium transferase (461 aa).

Lys294 carries the post-translational modification N6-(pyridoxal phosphate)lysine.

Belongs to the SelA family. Pyridoxal 5'-phosphate is required as a cofactor.

It localises to the cytoplasm. It carries out the reaction L-seryl-tRNA(Sec) + selenophosphate + H(+) = L-selenocysteinyl-tRNA(Sec) + phosphate. Its pathway is aminoacyl-tRNA biosynthesis; selenocysteinyl-tRNA(Sec) biosynthesis; selenocysteinyl-tRNA(Sec) from L-seryl-tRNA(Sec) (bacterial route): step 1/1. Functionally, converts seryl-tRNA(Sec) to selenocysteinyl-tRNA(Sec) required for selenoprotein biosynthesis. The protein is L-seryl-tRNA(Sec) selenium transferase of Actinobacillus pleuropneumoniae serotype 7 (strain AP76).